Here is a 546-residue protein sequence, read N- to C-terminus: Probable Xaa-Pro aminopeptidase pepP (546 aa).

Mn(2+) contacts are provided by aspartate 341, aspartate 352, glutamate 475, and glutamate 515.

It belongs to the peptidase M24B family. Requires Mn(2+) as cofactor.

The catalysed reaction is Release of any N-terminal amino acid, including proline, that is linked to proline, even from a dipeptide or tripeptide.. In terms of biological role, catalyzes the removal of a penultimate prolyl residue from the N-termini of peptides. This is Probable Xaa-Pro aminopeptidase pepP (pepP) from Sclerotinia sclerotiorum (strain ATCC 18683 / 1980 / Ss-1) (White mold).